The sequence spans 308 residues: 3'(2'),5'-bisphosphate nucleotidase 1 (308 aa).

N-acetylalanine is present on Ala-2. Asp-51 functions as the Proton acceptor in the catalytic mechanism. 4 residues coordinate Mg(2+): Glu-74, Asp-117, Leu-119, and Asp-120. The active-site Proton acceptor is the Thr-122. Phosphothreonine is present on Thr-122. AMP contacts are provided by Thr-195, His-198, Gly-220, and Lys-224. The residue at position 240 (Ser-240) is a Phosphoserine. An N6-succinyllysine modification is found at Lys-244. Mg(2+) is bound at residue Asp-247.

The protein belongs to the inositol monophosphatase superfamily. It depends on Mg(2+) as a cofactor. In terms of tissue distribution, highly expressed in kidney, liver, pancreas and heart. Detected at lower levels in brain, placenta, lung and skeletal muscle.

The catalysed reaction is adenosine 3',5'-bisphosphate + H2O = AMP + phosphate. It carries out the reaction adenosine 2',5'-bisphosphate + H2O = AMP + phosphate. It catalyses the reaction 3'-phosphoadenylyl sulfate + H2O = adenosine 5'-phosphosulfate + phosphate. The enzyme catalyses 1D-myo-inositol 1,4-bisphosphate + H2O = 1D-myo-inositol 4-phosphate + phosphate. The catalysed reaction is 1D-myo-inositol 1,3,4-trisphosphate + H2O = 1D-myo-inositol 3,4-bisphosphate + phosphate. Its activity is regulated as follows. Is very sensitive to inhibition by Li(+) (IC(50)=0.3 mM for hydrolysis of PAP; IC(50)=0.6 mM for hydrolysis of inositol-1,4-bis-phosphate). Is not affected by high Na(+) concentrations. Functionally, phosphatase that converts 3'(2')-phosphoadenosine 5'-phosphate (PAP) to AMP and inositol 1,4-bisphosphate (Ins(1,4)P2) to inositol 4-phosphate. Is also able to hydrolyze adenosine 3'-phosphate 5'-phosphosulfate (PAPS) to adenosine 5'-phosphosulfate (APS). Probably prevents the toxic accumulation of PAP, a compound which inhibits a variety of proteins, including PAPS-utilizing enzymes such as sulfotransferases, and RNA processing enzymes. Could also play a role in inositol recycling and phosphoinositide metabolism. Is not active on 3'-AMP, inositol-1-phosphate and inositol-1,4,5-triphosphate. The sequence is that of 3'(2'),5'-bisphosphate nucleotidase 1 (BPNT1) from Homo sapiens (Human).